Consider the following 214-residue polypeptide: MSIGLVGRKVGMTRIFTENGASVPVTVLEMSNNRVTQVRTPENDGYSAVQVAYGSRRNSRVNKSEAGHYAKAGVDAGELLREFRVAADVAAQYQPGAAVSVEVFQAGQKVDVTGVTQGKGFAGTIKRHNFKSQRASHGNSRSHNVPGSIGMAQDPGRVFPGKRMSGHMGAVSCTKQNLEVVRVDAERGLVLLKGAVPGSKGGHVVVRPAVKGGA.

The disordered stretch occupies residues 131–153 (KSQRASHGNSRSHNVPGSIGMAQ). Over residues 132–145 (SQRASHGNSRSHNV) the composition is skewed to polar residues. Q153 carries the post-translational modification N5-methylglutamine.

The protein belongs to the universal ribosomal protein uL3 family. Part of the 50S ribosomal subunit. Forms a cluster with proteins L14 and L19. Methylated by PrmB.

Its function is as follows. One of the primary rRNA binding proteins, it binds directly near the 3'-end of the 23S rRNA, where it nucleates assembly of the 50S subunit. This Thiobacillus denitrificans (strain ATCC 25259 / T1) protein is Large ribosomal subunit protein uL3.